A 285-amino-acid polypeptide reads, in one-letter code: 4-diphosphocytidyl-2-C-methyl-D-erythritol kinase (285 aa).

Residue Lys12 is part of the active site. 95 to 105 is a binding site for ATP; the sequence is PMGGGVGGGSS. Asp137 is an active-site residue.

This sequence belongs to the GHMP kinase family. IspE subfamily.

It carries out the reaction 4-CDP-2-C-methyl-D-erythritol + ATP = 4-CDP-2-C-methyl-D-erythritol 2-phosphate + ADP + H(+). It functions in the pathway isoprenoid biosynthesis; isopentenyl diphosphate biosynthesis via DXP pathway; isopentenyl diphosphate from 1-deoxy-D-xylulose 5-phosphate: step 3/6. In terms of biological role, catalyzes the phosphorylation of the position 2 hydroxy group of 4-diphosphocytidyl-2C-methyl-D-erythritol. The protein is 4-diphosphocytidyl-2-C-methyl-D-erythritol kinase of Actinobacillus pleuropneumoniae serotype 7 (strain AP76).